We begin with the raw amino-acid sequence, 177 residues long: MSRVAKAPVNIPAGIEVKINGQLLTVKGKNGELSREIHNAVEVNQDANALTFVPREGVANADAQAGTARALVNAMVIGVTEGFTKKLQLVGVGYRAQMKGNVVALSLGYSHPIEHTLPLGVTGECPSQTEIILKSADKQLIGQVAADIRAYRRPEPYKGKGVRYSDEVVRTKEAKKK.

The protein belongs to the universal ribosomal protein uL6 family. In terms of assembly, part of the 50S ribosomal subunit.

In terms of biological role, this protein binds to the 23S rRNA, and is important in its secondary structure. It is located near the subunit interface in the base of the L7/L12 stalk, and near the tRNA binding site of the peptidyltransferase center. The protein is Large ribosomal subunit protein uL6 of Haemophilus ducreyi (strain 35000HP / ATCC 700724).